We begin with the raw amino-acid sequence, 950 residues long: Zinc finger CCCH domain-containing protein 3 (950 aa).

Disordered stretches follow at residues 32-106, 127-182, 201-220, and 314-489; these read GNSS…HPEP, IKPP…TKVG, VVKSVGRVSDSSPEHRRTVS, and SEKS…VLRK. Positions 56–74 are enriched in basic residues; that stretch reads RPSRRGFSSHHGPSWRKKY. The segment covering 76–96 has biased composition (polar residues); it reads LVNQPVESSDPASDPAFQTSL. The span at 327-338 shows a compositional bias: polar residues; that stretch reads PRTTLESGNKAT. The span at 344 to 360 shows a compositional bias: basic and acidic residues; it reads KTEKPQPKVDPEVRPEK. The span at 370–388 shows a compositional bias: low complexity; sequence SPSKYKWKASSPSASSSSS. Polar residues predominate over residues 402 to 412; it reads SQLSPVPSRPT. Phosphoserine is present on S405. Positions 438 to 449 are enriched in basic residues; that stretch reads VKSRTKIIRRRG. Residues 460 to 470 show a composition bias toward polar residues; sequence SPTTATTSKNH. 5 consecutive C3H1-type zinc fingers follow at residues 662–690, 694–717, 718–744, 745–772, and 773–795; these read EKKREYCMYYNRFGRCNRGECCPYIHDPE, VCTRFVRGTCKKTDGSCPFSHHVS, KEKMPVCSYFLKGICSNSNCPYSHVYV, SRKAEVCSDFLKGYCPLGAKCKKKHTLL, and CPDFARRGICPRGSQCQLLHRNQ. The disordered stretch occupies residues 793–950; sequence RNQKRHGRRT…GKPLHIKPRL (158 aa). Residues 828-838 are compositionally biased toward polar residues; the sequence is PTTTQRSVRQM. The span at 839–849 shows a compositional bias: low complexity; sequence SSGLASGAEAP. A phosphoserine mark is found at S851 and S855. Residues 857-888 are compositionally biased toward low complexity; that stretch reads RVLASTSTLSSKATAASSPSPSPSTSSPAPSL. Over residues 914–928 the composition is skewed to polar residues; that stretch reads SLHSSPSPGGQTETG. Phosphoserine occurs at positions 918, 920, and 934.

In terms of assembly, interacts with SMAD1, SMAD3, SMAD4, CPSF2 and CPSF3.

The protein localises to the nucleus. Its function is as follows. Required for the export of polyadenylated mRNAs from the nucleus. Enhances ACVR1B-induced SMAD-dependent transcription. Binds to single-stranded DNA but not to double-stranded DNA in vitro. Involved in RNA cleavage. In Mus musculus (Mouse), this protein is Zinc finger CCCH domain-containing protein 3 (Zc3h3).